A 349-amino-acid chain; its full sequence is S-adenosylmethionine:tRNA ribosyltransferase-isomerase (349 aa).

Belongs to the QueA family. Monomer.

It is found in the cytoplasm. It catalyses the reaction 7-aminomethyl-7-carbaguanosine(34) in tRNA + S-adenosyl-L-methionine = epoxyqueuosine(34) in tRNA + adenine + L-methionine + 2 H(+). It participates in tRNA modification; tRNA-queuosine biosynthesis. Functionally, transfers and isomerizes the ribose moiety from AdoMet to the 7-aminomethyl group of 7-deazaguanine (preQ1-tRNA) to give epoxyqueuosine (oQ-tRNA). This is S-adenosylmethionine:tRNA ribosyltransferase-isomerase from Pseudomonas entomophila (strain L48).